The following is a 228-amino-acid chain: uncharacterized protein (228 aa).

A run of 4 helical transmembrane segments spans residues 37–54 (WCMH…TLIV), 67–89 (VVSI…STGV), 104–126 (HIGI…TSRL), and 138–160 (VLHV…LVLY).

It is found in the cell membrane. This is an uncharacterized protein from Treponema pallidum (strain Nichols).